Consider the following 307-residue polypeptide: MRYLITGATGGLGGHILEYFIAQIPFSDFAASSSSPENRSRFESRGVNFRHLDYENPTTLNRALHDVENLLFISTNANVIDVEKVKRQHRNVVEAARKANVKHVWYTSLPFGGLTNDSEVSVQRAHLATEKMLKESGLTFTCIREGIYVEGFPLFLNWYPETTLLTLPRDGEIAFTSRVELAVCTARLMIQGGFENRIVLLTAGETITAKELVSVINETTGRRVELRYVSPDEFVDAGPRNDRGGKSRAFFETLVSLWESAASGELRTMDGLMAEILGRDPIPPRDAVRQLLVENRDHTWHQMYAKK.

NADP(+) contacts are provided by residues 4 to 9 (LITGAT), 32 to 36 (SSSSP), 53 to 54 (DY), 74 to 76 (STN), and 148 to 151 (YVEG).

It belongs to the NmrA-type oxidoreductase family.

It carries out the reaction (2S)-5,5-dimethyl-2,3,4,5-tetrahydropyridine-2,6-dicarboxylate + NADPH + 2 H(+) = (6S)-3,3-dimethylpiperidine-2,6-dicarboxylate + NADP(+). The enzyme catalyses (2S)-5,5-dimethyl-2,3,4,5-tetrahydropyridine-2,6-dicarboxylate + NADH + 2 H(+) = (6S)-3,3-dimethylpiperidine-2,6-dicarboxylate + NAD(+). It participates in secondary metabolite biosynthesis; terpenoid biosynthesis. In terms of biological role, nmrA-like family domain-containing oxidoreductase; part of the gene cluster that mediates the biosynthesis of flavunoidine, an alkaloidal terpenoid with a tetracyclic cage-like core connected to dimethylcadaverine via a C-N bond and acylated with 5,5-dimethyl-L-pipecolate. The tetracyclic core is synthesized by the terpene cyclase flvE and the cytochrome P450 monooxygenase flvD. The terpene cyclase flvE catalyzes the cyclization of farnesyl pyrophosphate (FPP) to form (1R,4R,5S)-(+)-acoradiene and the cytochrome P450 monooxygenase flvD is then responsible for oxidative conversion of (1R,4R,5S)-(+)-acoradiene into the tetracyclic cage present in the final product flavunoidine. In parallel, the N-methyltransferase flvH dimethylates L-lysine to give N,N-dimethyl-L-Lysin which is decarboxylated by flvG to afford dimethylcadaverine. The terpene cyclase-like protein flvF is the enzyme that attaches the dimethylcadaverine precusor at the C-7 of the tetracyclic cage to yield pre-flavunoidine. The cytochrome monooxygenase flvC hydroxylates the C-10 position of pre-flavunoidine whereas the NRPS flvI acylates the terpenoid core at the hydroxylated C-10 with dimethylpipecolate to yield final flavunoidine. The bifunctional enzyme flvA and the dehydrogenase flvB are responsible for the synthesis of the dimethylpipecolate precursor. The PLP-dependent lyase domain of flvA might use L-O-acetyl-homoserine and alpha-keto-isovalerate to form an intermediary ketone that can cyclize intramolecularly to yield an imine. The imine can be reduced by flvB to yield the 6-carboxylated pipecolate. The C-terminal alpha-KG-dependent oxygenase domain of flvA is then proposed to catalyze the decarboxylation to yield dimethylpipecolate. This is NmrA-like family domain-containing oxidoreductase flvB from Aspergillus flavus (strain ATCC 200026 / FGSC A1120 / IAM 13836 / NRRL 3357 / JCM 12722 / SRRC 167).